A 270-amino-acid polypeptide reads, in one-letter code: Phosphatidylglycerol--prolipoprotein diacylglyceryl transferase (270 aa).

Helical transmembrane passes span 19-39 (FPVYWYGIIIGTGVLLGLWLA), 56-76 (LVLIAVPIAILFARMYYVIFE), 92-112 (QGGLAIHGGLIGAVITGVLFA), and 116-136 (GLSFWKLADIAAPSILLGQAI). R138 serves as a coordination point for a 1,2-diacyl-sn-glycero-3-phospho-(1'-sn-glycerol). The next 3 helical transmembrane spans lie at 178–198 (HPTFLYESLWNFAGVILLLAL), 206–226 (GELFFTYLIWYSVGRFFVEGL), and 236–256 (LRIAQVMSIGLVVISIIFIIV).

It belongs to the Lgt family.

The protein localises to the cell membrane. It catalyses the reaction L-cysteinyl-[prolipoprotein] + a 1,2-diacyl-sn-glycero-3-phospho-(1'-sn-glycerol) = an S-1,2-diacyl-sn-glyceryl-L-cysteinyl-[prolipoprotein] + sn-glycerol 1-phosphate + H(+). Its pathway is protein modification; lipoprotein biosynthesis (diacylglyceryl transfer). In terms of biological role, catalyzes the transfer of the diacylglyceryl group from phosphatidylglycerol to the sulfhydryl group of the N-terminal cysteine of a prolipoprotein, the first step in the formation of mature lipoproteins. This is Phosphatidylglycerol--prolipoprotein diacylglyceryl transferase from Bacillus cereus (strain ATCC 14579 / DSM 31 / CCUG 7414 / JCM 2152 / NBRC 15305 / NCIMB 9373 / NCTC 2599 / NRRL B-3711).